We begin with the raw amino-acid sequence, 162 residues long: Urease accessory protein UreE 1 (162 aa).

The interval 143–162 (SGGHQHHHGHDHDHHHPDHE) is disordered. The span at 152-162 (HDHDHHHPDHE) shows a compositional bias: basic and acidic residues.

This sequence belongs to the UreE family.

Its subcellular location is the cytoplasm. Its function is as follows. Involved in urease metallocenter assembly. Binds nickel. Probably functions as a nickel donor during metallocenter assembly. This chain is Urease accessory protein UreE 1, found in Brucella suis biovar 1 (strain 1330).